The following is a 498-amino-acid chain: ATP synthase subunit beta, chloroplastic (498 aa).

172-179 provides a ligand contact to ATP; that stretch reads GGAGVGKT.

This sequence belongs to the ATPase alpha/beta chains family. In terms of assembly, F-type ATPases have 2 components, CF(1) - the catalytic core - and CF(0) - the membrane proton channel. CF(1) has five subunits: alpha(3), beta(3), gamma(1), delta(1), epsilon(1). CF(0) has four main subunits: a(1), b(1), b'(1) and c(9-12).

It is found in the plastid. The protein localises to the chloroplast thylakoid membrane. It catalyses the reaction ATP + H2O + 4 H(+)(in) = ADP + phosphate + 5 H(+)(out). In terms of biological role, produces ATP from ADP in the presence of a proton gradient across the membrane. The catalytic sites are hosted primarily by the beta subunits. This chain is ATP synthase subunit beta, chloroplastic, found in Elaeis oleifera (American oil palm).